A 318-amino-acid chain; its full sequence is MSNEYFDPKLKIFSLNSNRELAEEIAKEVGIELGKSSVTHFSDGEIQINIEESIRGCHVYVIQSTSNPVNQNLMELLIMIDALKRASAATINIVMPYYGYARQDRKARSREPITAKLVANLIETAGATRMITLDMHAPQIQGFFDIPIDHLNAVRLLSNYFGERHLGDDLVVVSPDHGGVTRARKMADRLKAPIAIIDKRRPRPNVAEVMNIVGNVEGKVCIIIDDIIDTAGTITLAAKALREAGATKVYACCSHPVLSGPAMKRIEESPIEKLVVTNSIALPEDKWIDKMEQLSVAPLLGEAIVRVHENASVSSLFE.

Residues Asp-43 to Glu-45 and Arg-102 to Gln-103 each bind ATP. 2 residues coordinate Mg(2+): His-136 and Asp-176. The active site involves Lys-199. D-ribose 5-phosphate is bound by residues Arg-201, Asp-225, and Asp-229–Thr-233.

The protein belongs to the ribose-phosphate pyrophosphokinase family. Class I subfamily. Homohexamer. Mg(2+) serves as cofactor.

The protein localises to the cytoplasm. The catalysed reaction is D-ribose 5-phosphate + ATP = 5-phospho-alpha-D-ribose 1-diphosphate + AMP + H(+). The protein operates within metabolic intermediate biosynthesis; 5-phospho-alpha-D-ribose 1-diphosphate biosynthesis; 5-phospho-alpha-D-ribose 1-diphosphate from D-ribose 5-phosphate (route I): step 1/1. Functionally, involved in the biosynthesis of the central metabolite phospho-alpha-D-ribosyl-1-pyrophosphate (PRPP) via the transfer of pyrophosphoryl group from ATP to 1-hydroxyl of ribose-5-phosphate (Rib-5-P). In Listeria ivanovii, this protein is Ribose-phosphate pyrophosphokinase.